Reading from the N-terminus, the 442-residue chain is Protein cereblon (442 aa).

Residues 1 to 45 (MAGEGDQQDAAHNMGNHLPLLPAESEEEDEMEVEDQDSKEAKKPN) form a disordered region. A compositionally biased stretch (acidic residues) spans 24–35 (ESEEEDEMEVED). Position 25 is a phosphoserine (S25). Residues 81–319 (IPVLPQVMMI…CELDIMNKCT (239 aa)) form the Lon N-terminal domain. In terms of domain architecture, CULT spans 318–426 (CTSLCCKQCQ…LTRSALLPTI (109 aa)). Residues C323 and C326 each contribute to the Zn(2+) site. Positions 378, 380, and 386 each coordinate (S)-thalidomide. 2 residues coordinate Zn(2+): C391 and C394.

This sequence belongs to the CRBN family. In terms of assembly, interacts with KCNT1. Component of a DCX (DDB1-CUL4-X-box) protein ligase complex, at least composed of CRBN, CUL4A, DDB1 and RBX1. Interacts directly with DDB1. Interacts (in pomalidomide-bound form) with IKZF1 and IKZF3. Interacts with ILF2. Interacts with TRAF6 and ECSIT. In terms of processing, ubiquitinated, ubiquitination is mediated by its own DCX protein ligase complex. In terms of tissue distribution, widely expressed. Highly expressed in brain.

The protein resides in the cytoplasm. The protein localises to the nucleus. Its subcellular location is the membrane. Its pathway is protein modification; protein ubiquitination. Its function is as follows. Substrate recognition component of a DCX (DDB1-CUL4-X-box) E3 protein ligase complex that mediates the ubiquitination and subsequent proteasomal degradation of target proteins, such as MEIS2, ILF2 or GLUL. Normal degradation of key regulatory proteins is required for normal limb outgrowth and expression of the fibroblast growth factor FGF8. Maintains presynaptic glutamate release and consequently cognitive functions, such as memory and learning, by negatively regulating large-conductance calcium-activated potassium (BK) channels in excitatory neurons. Likely to function by regulating the assembly and neuronal surface expression of BK channels via its interaction with KCNT1. May also be involved in regulating anxiety-like behaviors via a BK channel-independent mechanism. Plays a negative role in TLR4 signaling by interacting with TRAF6 and ECSIT, leading to inhibition of ECSIT ubiquitination, an important step of the signaling. In Homo sapiens (Human), this protein is Protein cereblon (CRBN).